Here is a 134-residue protein sequence, read N- to C-terminus: Profilin-3 (134 aa).

Cysteines 13 and 118 form a disulfide. The Involved in PIP2 interaction signature appears at 84–100; sequence AVIRGKKGSGGITSKKT. Thr114 carries the post-translational modification Phosphothreonine.

This sequence belongs to the profilin family. As to quaternary structure, occurs in many kinds of cells as a complex with monomeric actin in a 1:1 ratio. Post-translationally, phosphorylated by MAP kinases.

The protein localises to the cytoplasm. It is found in the cytoskeleton. Functionally, binds to actin and affects the structure of the cytoskeleton. At high concentrations, profilin prevents the polymerization of actin, whereas it enhances it at low concentrations. This is Profilin-3 from Olea europaea (Common olive).